The primary structure comprises 196 residues: Guanylate kinase (196 aa).

In terms of domain architecture, Guanylate kinase-like spans 8-191 (GRLIVLTGPT…AAADLWSVIA (184 aa)). ATP is bound at residue 15 to 22 (GPTAVGKG).

Belongs to the guanylate kinase family.

It localises to the cytoplasm. It carries out the reaction GMP + ATP = GDP + ADP. Functionally, essential for recycling GMP and indirectly, cGMP. The polypeptide is Guanylate kinase (Bifidobacterium longum (strain NCC 2705)).